Consider the following 339-residue polypeptide: NADH-quinone oxidoreductase subunit H (339 aa).

9 consecutive transmembrane segments (helical) span residues 10–30, 50–70, 82–102, 115–135, 161–181, 187–207, 235–255, 275–295, and 311–331; these read FPLTVIALKVVAITIPLILCV, PNVVGPFGLLQPIADAVKLLF, ILFILAPIITFVLSLIGWAVI, VGVLYILAISSLSVYGIIIAG, MGLVIITVLLTTGTLNLSGII, LPWWIDLMLLPMSIVFFISVL, MGFALFFLGEYANMILVSAMT, IPGFFWFVFKVGFLLFCFLWI, and GWKVFLPFTLFGVVLVSSVLF.

This sequence belongs to the complex I subunit 1 family. As to quaternary structure, NDH-1 is composed of 14 different subunits. Subunits NuoA, H, J, K, L, M, N constitute the membrane sector of the complex.

The protein resides in the cell inner membrane. The catalysed reaction is a quinone + NADH + 5 H(+)(in) = a quinol + NAD(+) + 4 H(+)(out). Functionally, NDH-1 shuttles electrons from NADH, via FMN and iron-sulfur (Fe-S) centers, to quinones in the respiratory chain. The immediate electron acceptor for the enzyme in this species is believed to be ubiquinone. Couples the redox reaction to proton translocation (for every two electrons transferred, four hydrogen ions are translocated across the cytoplasmic membrane), and thus conserves the redox energy in a proton gradient. This subunit may bind ubiquinone. The protein is NADH-quinone oxidoreductase subunit H of Rickettsia prowazekii (strain Madrid E).